A 287-amino-acid polypeptide reads, in one-letter code: Urease accessory protein UreD (287 aa).

It belongs to the UreD family. As to quaternary structure, ureD, UreF and UreG form a complex that acts as a GTP-hydrolysis-dependent molecular chaperone, activating the urease apoprotein by helping to assemble the nickel containing metallocenter of UreC. The UreE protein probably delivers the nickel.

The protein resides in the cytoplasm. In terms of biological role, required for maturation of urease via the functional incorporation of the urease nickel metallocenter. This is Urease accessory protein UreD from Aliivibrio fischeri (strain MJ11) (Vibrio fischeri).